Reading from the N-terminus, the 473-residue chain is Photosystem II CP43 reaction center protein (473 aa).

The propeptide occupies 1–14 (MKTLYSLRRFYPVE). T15 is subject to N-acetylthreonine. Position 15 is a phosphothreonine (T15). 5 consecutive transmembrane segments (helical) span residues 69 to 93 (LFEV…PHLA), 134 to 155 (LLGP…KDRN), 178 to 200 (KALY…RKIT), 255 to 275 (KPFA…LSYS), and 291 to 312 (WFNN…ASQA). E367 lines the [CaMn4O5] cluster pocket. A helical transmembrane segment spans residues 447–471 (RARAAAAGFEKGIDRDFEPVLFMTP).

This sequence belongs to the PsbB/PsbC family. PsbC subfamily. PSII is composed of 1 copy each of membrane proteins PsbA, PsbB, PsbC, PsbD, PsbE, PsbF, PsbH, PsbI, PsbJ, PsbK, PsbL, PsbM, PsbT, PsbX, PsbY, PsbZ, Psb30/Ycf12, at least 3 peripheral proteins of the oxygen-evolving complex and a large number of cofactors. It forms dimeric complexes. Requires Binds multiple chlorophylls and provides some of the ligands for the Ca-4Mn-5O cluster of the oxygen-evolving complex. It may also provide a ligand for a Cl- that is required for oxygen evolution. PSII binds additional chlorophylls, carotenoids and specific lipids. as cofactor.

Its subcellular location is the plastid. It localises to the chloroplast thylakoid membrane. Its function is as follows. One of the components of the core complex of photosystem II (PSII). It binds chlorophyll and helps catalyze the primary light-induced photochemical processes of PSII. PSII is a light-driven water:plastoquinone oxidoreductase, using light energy to abstract electrons from H(2)O, generating O(2) and a proton gradient subsequently used for ATP formation. This is Photosystem II CP43 reaction center protein from Cucumis sativus (Cucumber).